A 499-amino-acid chain; its full sequence is Probable cytosol aminopeptidase (499 aa).

Mn(2+) contacts are provided by lysine 264 and aspartate 269. Residue lysine 276 is part of the active site. Mn(2+) is bound by residues aspartate 287, aspartate 346, and glutamate 348. The active site involves arginine 350.

Belongs to the peptidase M17 family. Requires Mn(2+) as cofactor.

It localises to the cytoplasm. It carries out the reaction Release of an N-terminal amino acid, Xaa-|-Yaa-, in which Xaa is preferably Leu, but may be other amino acids including Pro although not Arg or Lys, and Yaa may be Pro. Amino acid amides and methyl esters are also readily hydrolyzed, but rates on arylamides are exceedingly low.. It catalyses the reaction Release of an N-terminal amino acid, preferentially leucine, but not glutamic or aspartic acids.. Presumably involved in the processing and regular turnover of intracellular proteins. Catalyzes the removal of unsubstituted N-terminal amino acids from various peptides. The polypeptide is Probable cytosol aminopeptidase (Rhodopseudomonas palustris (strain BisB18)).